The chain runs to 319 residues: Coiled-coil domain-containing protein PF3D7_1144200 (319 aa).

Residues 1–12 (MSEEHSNDHIED) are compositionally biased toward basic and acidic residues. Disordered regions lie at residues 1-43 (MSEE…SESS) and 112-158 (KLEK…NQHN). The segment covering 16–26 (CSQNCDETNSP) has biased composition (polar residues). Basic and acidic residues-rich tracts occupy residues 27 to 36 (KNEKDEKDFK) and 112 to 131 (KLEKEKEKNEKKEKKEKKVT). 3 coiled-coil regions span residues 100–134 (DLANKKENKTKFKLEKEKEKNEKKEKKEKKVTNDS), 166–242 (ELNE…IKKN), and 281–310 (NSNCEQIQNVRDEFAELKNDLNKIMNLINI). Residues 132-150 (NDSTNNKNKNNSVPFLNEN) show a composition bias toward low complexity.

The sequence is that of Coiled-coil domain-containing protein PF3D7_1144200 from Plasmodium falciparum (isolate 3D7).